We begin with the raw amino-acid sequence, 148 residues long: MASKRILKELKDLQKDPPTSCSAGPVAEDMFHWQATLMGPSDSPYAGGVFLVTIHFPPDYPFKPPKVALKTKVFHPNINSNGSICLDILKEQWSPALTISKVLLSICSLLTDPNPDDPLVPEIAHMYKTDRAKYESTARSWTQKYAMG.

The 147-residue stretch at 1 to 147 folds into the UBC core domain; the sequence is MASKRILKEL…ARSWTQKYAM (147 aa). The active-site Glycyl thioester intermediate is Cys-85.

Belongs to the ubiquitin-conjugating enzyme family.

The enzyme catalyses S-ubiquitinyl-[E1 ubiquitin-activating enzyme]-L-cysteine + [E2 ubiquitin-conjugating enzyme]-L-cysteine = [E1 ubiquitin-activating enzyme]-L-cysteine + S-ubiquitinyl-[E2 ubiquitin-conjugating enzyme]-L-cysteine.. Its pathway is protein modification; protein ubiquitination. E2 conjugating enzyme that associates with the E3 ubiquitin-protein ligase EL5 to mediate ubiquitination of target proteins. In Oryza sativa subsp. japonica (Rice), this protein is Ubiquitin-conjugating enzyme E2 5B (UBC5B).